The primary structure comprises 429 residues: Enolase (429 aa).

Q162 contacts (2R)-2-phosphoglycerate. Residue E204 is the Proton donor of the active site. Positions 241, 283, and 310 each coordinate Mg(2+). Residues K335, R364, S365, and K386 each coordinate (2R)-2-phosphoglycerate. Catalysis depends on K335, which acts as the Proton acceptor.

The protein belongs to the enolase family. The cofactor is Mg(2+).

Its subcellular location is the cytoplasm. It is found in the secreted. The protein resides in the cell surface. It catalyses the reaction (2R)-2-phosphoglycerate = phosphoenolpyruvate + H2O. It participates in carbohydrate degradation; glycolysis; pyruvate from D-glyceraldehyde 3-phosphate: step 4/5. Catalyzes the reversible conversion of 2-phosphoglycerate (2-PG) into phosphoenolpyruvate (PEP). It is essential for the degradation of carbohydrates via glycolysis. This is Enolase from Mycolicibacterium vanbaalenii (strain DSM 7251 / JCM 13017 / BCRC 16820 / KCTC 9966 / NRRL B-24157 / PYR-1) (Mycobacterium vanbaalenii).